We begin with the raw amino-acid sequence, 1317 residues long: DNA-directed RNA polymerase subunit beta' (1317 aa).

The Zn(2+) site is built by Cys-214, Cys-286, Cys-293, and Cys-296. The interval 1279-1317 (RAYAGTQLSQDDEEFEETYDTDEDDFDMDDDDDFGDDED) is disordered. Over residues 1288–1317 (QDDEEFEETYDTDEDDFDMDDDDDFGDDED) the composition is skewed to acidic residues.

This sequence belongs to the RNA polymerase beta' chain family. RpoC2 subfamily. In terms of assembly, in cyanobacteria the RNAP catalytic core is composed of 2 alpha, 1 beta, 1 beta', 1 gamma and 1 omega subunit. When a sigma factor is associated with the core the holoenzyme is formed, which can initiate transcription. Zn(2+) serves as cofactor.

The enzyme catalyses RNA(n) + a ribonucleoside 5'-triphosphate = RNA(n+1) + diphosphate. Its function is as follows. DNA-dependent RNA polymerase catalyzes the transcription of DNA into RNA using the four ribonucleoside triphosphates as substrates. This chain is DNA-directed RNA polymerase subunit beta', found in Synechocystis sp. (strain ATCC 27184 / PCC 6803 / Kazusa).